A 616-amino-acid polypeptide reads, in one-letter code: Chaperone protein HscA (616 aa).

It belongs to the heat shock protein 70 family.

In terms of biological role, chaperone involved in the maturation of iron-sulfur cluster-containing proteins. Has a low intrinsic ATPase activity which is markedly stimulated by HscB. Involved in the maturation of IscU. The chain is Chaperone protein HscA from Klebsiella pneumoniae (strain 342).